A 75-amino-acid chain; its full sequence is Large ribosomal subunit protein uL30 (75 aa).

It belongs to the universal ribosomal protein uL30 family. As to quaternary structure, part of the 50S ribosomal subunit.

The polypeptide is Large ribosomal subunit protein uL30 (Roseiflexus castenholzii (strain DSM 13941 / HLO8)).